Consider the following 293-residue polypeptide: NAD-dependent protein deacetylase (293 aa).

One can recognise a Deacetylase sirtuin-type domain in the interval 1–284 (MTVAITQTGP…QPPDPLHTAT (284 aa)). Residues 27–47 (GAGC…GGWK) and 105–108 (QNVD) contribute to the NAD(+) site. His-123 (proton acceptor) is an active-site residue. Zn(2+) is bound by residues Cys-131, Cys-134, Cys-182, and Cys-185. NAD(+) is bound by residues 222–224 (GSS), 248–250 (NFG), and Cys-266.

This sequence belongs to the sirtuin family. Class II subfamily. It depends on Zn(2+) as a cofactor.

The protein resides in the cytoplasm. The catalysed reaction is N(6)-acetyl-L-lysyl-[protein] + NAD(+) + H2O = 2''-O-acetyl-ADP-D-ribose + nicotinamide + L-lysyl-[protein]. In terms of biological role, NAD-dependent protein deacetylase which modulates the activities of several enzymes which are inactive in their acetylated form. This Xanthomonas campestris pv. campestris (strain B100) protein is NAD-dependent protein deacetylase.